A 733-amino-acid chain; its full sequence is MTKQVFKTVFAGRELVVETGQVAKQANGSAVVRYGESTVLTAATMSKKMATGDFFPLQVNYEEKMYAAGKYPGGFNKREGRPSTDATLTARLIDRPIRPMFAEGFRNEVQVINTVLSYDEDASPQMAAMFGSSLALSISDIPFNGPIAGVQVGYVDGKFIINPSKEQKEVSLLELTVAGTKDAINMVESGAKELSEDIMLEALLKGHEAVKELIAFQEEIVAAVGKGKAEVELLHVDEELQAEIVAAYNSDLQKAVQVEEKLAREAATQAVKDQVTAVYEEKYADHEEFDRIMRDVAEILEQMEHAEVRRLITEDKVRPDGRKVDEIRPLDAEVDYLPRVHGSGLFTRGQTQALSVLTLAPMGETQIVDGLDPEYKKRFMHHYNFPQYSVGETGRYGAPGRREIGHGALGERALEQVLPSLEEFPYAIRLVAEVLESNGSSSQASICAGTLALMAGGVPIKAPVAGIAMGLISDGSNYTVLTDIQGLEDHFGDMDFKVAGTREGITALQMDIKIEGITAEILTEALAQAKKARFEILDLIEATIPAPRPELAPTAPKIDTIKIDVDKIKIVIGKGGETIDKIIAETGVKIDIDEEGNVSIYSSDQDAINRAKEIIAGLVREAKVDEVYHAKVVRIEKFGAFVNLFDKTDALVHISELAWTRTNNVEDVVQIGDEVDVKVIKIDAKGRVDASMKVLLPRPPKSDKPKHHHDKGHHPHKEYKGHKDHQESPKTEE.

The Mg(2+) site is built by Asp-489 and Asp-495. A KH domain is found at 556–615 (PKIDTIKIDVDKIKIVIGKGGETIDKIIAETGVKIDIDEEGNVSIYSSDQDAINRAKEII). The 69-residue stretch at 625–693 (DEVYHAKVVR…AKGRVDASMK (69 aa)) folds into the S1 motif domain. Residues 691–733 (SMKVLLPRPPKSDKPKHHHDKGHHPHKEYKGHKDHQESPKTEE) form a disordered region. Residues 704-723 (KPKHHHDKGHHPHKEYKGHK) show a composition bias toward basic residues. The segment covering 724 to 733 (DHQESPKTEE) has biased composition (basic and acidic residues).

The protein belongs to the polyribonucleotide nucleotidyltransferase family. Mg(2+) serves as cofactor.

The protein resides in the cytoplasm. The enzyme catalyses RNA(n+1) + phosphate = RNA(n) + a ribonucleoside 5'-diphosphate. Involved in mRNA degradation. Catalyzes the phosphorolysis of single-stranded polyribonucleotides processively in the 3'- to 5'-direction. The chain is Polyribonucleotide nucleotidyltransferase from Streptococcus sanguinis (strain SK36).